Here is a 210-residue protein sequence, read N- to C-terminus: Chaperone protein TorD (210 aa).

Belongs to the TorD/DmsD family. TorD subfamily.

The protein resides in the cytoplasm. Functionally, involved in the biogenesis of TorA. Acts on TorA before the insertion of the molybdenum cofactor and, as a result, probably favors a conformation of the apoenzyme that is competent for acquiring the cofactor. The polypeptide is Chaperone protein TorD (Salmonella newport (strain SL254)).